Here is a 1312-residue protein sequence, read N- to C-terminus: Angiotensin-converting enzyme (1312 aa).

The N-terminal stretch at 1 to 34 (MGAASGQRGRWPLSPPLLMLSLLVLLLQPSPAPA) is a signal peptide. Residues 35-1264 (LDPGLQPGNF…LEPQQARVGQ (1230 aa)) are Extracellular-facing. Peptidase M2 domains follow at residues 45 to 629 (SPDE…LGWP) and 648 to 1227 (ETDE…LGWP). N-linked (GlcNAc...) asparagine glycans are attached at residues asparagine 59, asparagine 79, asparagine 116, asparagine 151, and asparagine 165. The cysteines at positions 162 and 170 are disulfide-linked. A chloride-binding site is contributed by tyrosine 236. A glycan (N-linked (GlcNAc...) asparagine) is linked at asparagine 323. Residues cysteine 364 and cysteine 382 are joined by a disulfide bond. Position 395 (histidine 395) interacts with Zn(2+). The active-site Proton acceptor 1 is the glutamate 396. The Zn(2+) site is built by histidine 399 and glutamate 423. N-linked (GlcNAc...) asparagine glycosylation is present at asparagine 514. Histidine 525 functions as the Proton donor 1 in the catalytic mechanism. Arginine 534 contacts chloride. A disulfide bridge connects residues cysteine 550 and cysteine 562. Asparagine 682 carries an N-linked (GlcNAc...) asparagine glycan. 2 N-linked (GlcNAc...) (complex) asparagine glycosylation sites follow: asparagine 700 and asparagine 719. Residues cysteine 762 and cysteine 768 are joined by a disulfide bond. Asparagine 765 carries N-linked (GlcNAc...) asparagine glycosylation. The chloride site is built by arginine 796 and tyrosine 834. Residue asparagine 947 is glycosylated (N-linked (GlcNAc...) asparagine). Residues cysteine 962 and cysteine 980 are joined by a disulfide bond. Histidine 993 provides a ligand contact to Zn(2+). The Proton acceptor 2 role is filled by glutamate 994. 2 residues coordinate Zn(2+): histidine 997 and glutamate 1021. 2 residues coordinate chloride: tryptophan 1095 and arginine 1099. The active-site Proton donor 2 is the histidine 1123. Arginine 1132 contributes to the chloride binding site. The cysteines at positions 1148 and 1160 are disulfide-linked. Residue asparagine 1196 is glycosylated (N-linked (GlcNAc...) asparagine). The interval 1220-1261 (HGETLGWPEYNWAPNTARAEGSTAESNRVNFLGLYLEPQQAR) is juxtamembrane stalk. The helical transmembrane segment at 1265–1281 (WVLLFLGVALLVATVGL) threads the bilayer. Residues 1282 to 1312 (AHRLYNIRNHHSLRRPHRGPQFGSEVELRHS) lie on the Cytoplasmic side of the membrane. Serine 1305 is modified (phosphoserine).

It belongs to the peptidase M2 family. Monomer and homodimer; homodimerizes following binding to an inhibitor. Interacts with calmodulin (CALM1, CALM2 or CALM3); interaction takes place in the cytoplasmic region and regulates phosphorylation and proteolytic cleavage. Requires Zn(2+) as cofactor. Chloride serves as cofactor. Produced following proteolytic cleavage by secretase enzymes that cleave the transmembrane form in the juxtamembrane stalk region upstream of the transmembrane region. Cleavage can take place at different sites of the juxtamembrane stalk region. In terms of processing, phosphorylated by CK2 on Ser-1305; which allows membrane retention. Phosphorylated on tyrosine residues on its extracellular part, promoting cleavage by secretase enzymes and formation of the soluble form (Angiotensin-converting enzyme, soluble form). In terms of tissue distribution, highly expressed in kidney and lung; not expressed in the liver. In the brain, expressed in the cerebral cortex, hippocampus, cerebellum and basal ganglia/brainstem. Highly expressed in dopamine receptor DRD1-expressing neurons in the dorsal striatum and the nucleus accumbens of the brain. Specifically expressed in spermatocytes, adult testis.

The protein localises to the cell membrane. Its subcellular location is the cytoplasm. The protein resides in the secreted. It catalyses the reaction Release of a C-terminal dipeptide, oligopeptide-|-Xaa-Yaa, when Xaa is not Pro, and Yaa is neither Asp nor Glu. Thus, conversion of angiotensin I to angiotensin II, with increase in vasoconstrictor activity, but no action on angiotensin II.. It carries out the reaction angiotensin I + H2O = L-histidyl-L-leucine + angiotensin II. The catalysed reaction is bradykinin + H2O = L-Phe-L-Arg + bradykinin(1-7). The enzyme catalyses substance P + H2O = substance P(1-9) + L-Leu-L-Met-NH2. It catalyses the reaction substance P + H2O = substance P(1-8) + Gly-L-Leu-L-Met-NH2. It carries out the reaction substance P + H2O = L-Phe-L-Phe-Gly-L-Leu-L-Met-NH2 + substance P(1-6). The catalysed reaction is neurotensin + H2O = neurotensin(1-11) + L-isoleucyl-L-leucine. The enzyme catalyses goralatide + H2O = N-acetyl-L-seryl-L-aspartate + L-lysyl-L-proline. It catalyses the reaction Met-enkephalin + H2O = L-phenylalanyl-L-methionine + L-tyrosylglycylglycine. It carries out the reaction Leu-enkephalin + H2O = L-tyrosylglycylglycine + L-phenylalanyl-L-leucine. The catalysed reaction is Met-enkephalin-Arg-Phe + H2O = L-arginyl-L-phenylalanine + Met-enkephalin. Its activity is regulated as follows. The dipeptidyl carboxypeptidase activity is specifically inhibited by lisinopril, captopril and enalaprilat. The N-terminal catalytic domain, but not the C-terminal catalytic domain, is specifically inhibited by the phosphinic peptide RXP 407. With respect to regulation, the putative GPIase activity is nearly insensitive to captopril. Functionally, dipeptidyl carboxypeptidase that removes dipeptides from the C-terminus of a variety of circulating hormones, such as angiotensin I, bradykinin or enkephalins, thereby playing a key role in the regulation of blood pressure, electrolyte homeostasis or synaptic plasticity. Composed of two similar catalytic domains, each possessing a functional active site, with different selectivity for substrates. Plays a major role in the angiotensin-renin system that regulates blood pressure and sodium retention by the kidney by converting angiotensin I to angiotensin II, resulting in an increase of the vasoconstrictor activity of angiotensin. Also able to inactivate bradykinin, a potent vasodilator, and therefore enhance the blood pressure response. Acts as a regulator of synaptic transmission by mediating cleavage of neuropeptide hormones, such as substance P, neurotensin or enkephalins. Catalyzes degradation of different enkephalin neuropeptides (Met-enkephalin, Leu-enkephalin, Met-enkephalin-Arg-Phe and possibly Met-enkephalin-Arg-Gly-Leu). Acts as a regulator of synaptic plasticity in the nucleus accumbens of the brain by mediating cleavage of Met-enkephalin-Arg-Phe, a strong ligand of Mu-type opioid receptor OPRM1, into Met-enkephalin. Met-enkephalin-Arg-Phe cleavage by ACE decreases activation of OPRM1, leading to long-term synaptic potentiation of glutamate release. Also acts as a regulator of hematopoietic stem cell differentiation by mediating degradation of hemoregulatory peptide N-acetyl-SDKP (AcSDKP). Acts as a regulator of cannabinoid signaling pathway by mediating degradation of hemopressin, an antagonist peptide of the cannabinoid receptor CNR1. Involved in amyloid-beta metabolism by catalyzing degradation of Amyloid-beta protein 40 and Amyloid-beta protein 42 peptides, thereby preventing plaque formation. Catalyzes cleavage of cholecystokinin (maturation of Cholecystokinin-8 and Cholecystokinin-5) and Gonadoliberin-1 (both maturation and degradation) hormones. Degradation of hemoregulatory peptide N-acetyl-SDKP (AcSDKP) and amyloid-beta proteins is mediated by the N-terminal catalytic domain, while angiotensin I and cholecystokinin cleavage is mediated by the C-terminal catalytic region. In terms of biological role, soluble form that is released in blood plasma and other body fluids following proteolytic cleavage in the juxtamembrane stalk region. Its function is as follows. Isoform produced by alternative promoter usage that is specifically expressed in spermatocytes and adult testis, and which is required for male fertility. In contrast to somatic isoforms, only contains one catalytic domain. Acts as a dipeptidyl carboxypeptidase that removes dipeptides from the C-terminus of substrates. The identity of substrates that are needed for male fertility is unknown. Isoform Testis-specific and isoform Somatic have distinct activities and cannot completely compensate for the loss of the other when expressed in somatic tissues or testis. May also have a glycosidase activity which releases GPI-anchored proteins from the membrane by cleaving the mannose linkage in the GPI moiety. The GPIase activity was reported to be essential for the egg-binding ability of the sperm. This activity is however unclear and has been challenged by other groups, suggesting that it may be indirect. This Mus musculus (Mouse) protein is Angiotensin-converting enzyme.